The primary structure comprises 306 residues: UDP-N-acetylenolpyruvoylglucosamine reductase (306 aa).

One can recognise an FAD-binding PCMH-type domain in the interval 33–197 (TGGEADFYLS…LEAAFTLEPG (165 aa)). Residue R176 is part of the active site. Residue S226 is the Proton donor of the active site. Residue E296 is part of the active site.

It belongs to the MurB family. It depends on FAD as a cofactor.

It is found in the cytoplasm. The catalysed reaction is UDP-N-acetyl-alpha-D-muramate + NADP(+) = UDP-N-acetyl-3-O-(1-carboxyvinyl)-alpha-D-glucosamine + NADPH + H(+). It functions in the pathway cell wall biogenesis; peptidoglycan biosynthesis. Cell wall formation. The polypeptide is UDP-N-acetylenolpyruvoylglucosamine reductase (Staphylococcus epidermidis (strain ATCC 35984 / DSM 28319 / BCRC 17069 / CCUG 31568 / BM 3577 / RP62A)).